The following is a 305-amino-acid chain: UDP-3-O-acyl-N-acetylglucosamine deacetylase (305 aa).

Zn(2+) is bound by residues histidine 79, histidine 238, and aspartate 242. Histidine 265 acts as the Proton donor in catalysis.

This sequence belongs to the LpxC family. The cofactor is Zn(2+).

The catalysed reaction is a UDP-3-O-[(3R)-3-hydroxyacyl]-N-acetyl-alpha-D-glucosamine + H2O = a UDP-3-O-[(3R)-3-hydroxyacyl]-alpha-D-glucosamine + acetate. It participates in glycolipid biosynthesis; lipid IV(A) biosynthesis; lipid IV(A) from (3R)-3-hydroxytetradecanoyl-[acyl-carrier-protein] and UDP-N-acetyl-alpha-D-glucosamine: step 2/6. Functionally, catalyzes the hydrolysis of UDP-3-O-myristoyl-N-acetylglucosamine to form UDP-3-O-myristoylglucosamine and acetate, the committed step in lipid A biosynthesis. The protein is UDP-3-O-acyl-N-acetylglucosamine deacetylase of Klebsiella pneumoniae subsp. pneumoniae (strain ATCC 700721 / MGH 78578).